We begin with the raw amino-acid sequence, 198 residues long: tRNA (pseudouridine(54)-N(1))-methyltransferase (198 aa).

Leu-128 contributes to the S-adenosyl-L-methionine binding site.

The protein belongs to the methyltransferase superfamily. TrmY family. In terms of assembly, homodimer.

The protein localises to the cytoplasm. It carries out the reaction pseudouridine(54) in tRNA + S-adenosyl-L-methionine = N(1)-methylpseudouridine(54) in tRNA + S-adenosyl-L-homocysteine + H(+). In terms of biological role, specifically catalyzes the N1-methylation of pseudouridine at position 54 (Psi54) in tRNAs. This Natronomonas pharaonis (strain ATCC 35678 / DSM 2160 / CIP 103997 / JCM 8858 / NBRC 14720 / NCIMB 2260 / Gabara) (Halobacterium pharaonis) protein is tRNA (pseudouridine(54)-N(1))-methyltransferase.